We begin with the raw amino-acid sequence, 1433 residues long: DNA-directed RNA polymerase subunit beta' (1433 aa).

Zn(2+) contacts are provided by cysteine 66, cysteine 68, cysteine 81, and cysteine 84. Residues aspartate 473, aspartate 475, and aspartate 477 each coordinate Mg(2+). Zn(2+) contacts are provided by cysteine 815, cysteine 889, cysteine 896, and cysteine 899.

The protein belongs to the RNA polymerase beta' chain family. In terms of assembly, the RNAP catalytic core consists of 2 alpha, 1 beta, 1 beta' and 1 omega subunit. When a sigma factor is associated with the core the holoenzyme is formed, which can initiate transcription. It depends on Mg(2+) as a cofactor. Zn(2+) serves as cofactor.

It carries out the reaction RNA(n) + a ribonucleoside 5'-triphosphate = RNA(n+1) + diphosphate. Its function is as follows. DNA-dependent RNA polymerase catalyzes the transcription of DNA into RNA using the four ribonucleoside triphosphates as substrates. The chain is DNA-directed RNA polymerase subunit beta' from Porphyromonas gingivalis (strain ATCC 33277 / DSM 20709 / CIP 103683 / JCM 12257 / NCTC 11834 / 2561).